Reading from the N-terminus, the 521-residue chain is Medium/long-chain-fatty-acid--[acyl-carrier-protein] ligase MbtM (521 aa).

The protein belongs to the ATP-dependent AMP-binding enzyme family.

It carries out the reaction a long-chain fatty acid + holo-[ACP] + ATP = a long-chain fatty acyl-[ACP] + AMP + diphosphate. The enzyme catalyses a medium-chain fatty acid + holo-[ACP] + ATP = a medium-chain fatty acyl-[ACP] + AMP + diphosphate. It functions in the pathway siderophore biosynthesis; mycobactin biosynthesis. Activates lipidic moieties required for mycobactin biosynthesis. Converts medium- to long-chain aliphatic fatty acids into acyl adenylate, which is further transferred on to the phosphopantetheine arm of the carrier protein MbtL. The polypeptide is Medium/long-chain-fatty-acid--[acyl-carrier-protein] ligase MbtM (mbtM) (Mycobacterium tuberculosis (strain CDC 1551 / Oshkosh)).